The following is a 312-amino-acid chain: Olfactory receptor 1D5 (312 aa).

The Extracellular portion of the chain corresponds to 1–25 (MDGDNQSENSQFLLLGISESPEQQQ). Residue Asn5 is glycosylated (N-linked (GlcNAc...) asparagine). Residues 26–49 (ILFWMFLSMYLVTVLGNVLIILAI) form a helical membrane-spanning segment. The Cytoplasmic portion of the chain corresponds to 50–57 (SSDSRLHT). A helical membrane pass occupies residues 58 to 79 (PMYFFLANLSFTDLFFVTNTIP). At 80-100 (KMLVNLQSQNKAISYAGCLTQ) the chain is on the extracellular side. A disulfide bond links Cys97 and Cys189. Residues 101–120 (LYFLVSLVTLDNLILAVMAY) traverse the membrane as a helical segment. Topologically, residues 121–140 (DRYVAICCPLHYVTAMSPGL) are cytoplasmic. A helical membrane pass occupies residues 141–158 (CVLLLSLCWGLSVFYGLL). At 159–196 (LTLLLTRVTFCGPREIHYLFCDMYILLRLACSNTHIIH) the chain is on the extracellular side. Residues 197–220 (TVLVATGCFIFLTPLGFMTTSYVR) form a helical membrane-spanning segment. The Cytoplasmic portion of the chain corresponds to 221-237 (IVRTILQIPSASKKYKA). Residues 238–260 (FSTCASHLGVVSLFYGTLAMVYL) traverse the membrane as a helical segment. Topologically, residues 261–271 (QPLHTYSMKDS) are extracellular. Residues 272–291 (VATVMYAVVTPMMNPFIHSL) form a helical membrane-spanning segment. Topologically, residues 292-312 (RNKDMHGALGRVLRRLFQRPK) are cytoplasmic.

This sequence belongs to the G-protein coupled receptor 1 family.

It is found in the cell membrane. Functionally, odorant receptor. This chain is Olfactory receptor 1D5 (OR1D5), found in Pan troglodytes (Chimpanzee).